We begin with the raw amino-acid sequence, 553 residues long: Threonylcarbamoyladenosine tRNA methylthiotransferase (553 aa).

The segment at 21 to 61 (SAEDVKPQERYQNKKSVTVRAKKRVQIKPETDAEEKPTPRP) is disordered. Composition is skewed to basic and acidic residues over residues 23–32 (EDVKPQERYQ) and 47–58 (IKPETDAEEKPT). An MTTase N-terminal domain is found at 72–179 (QKVFVKTWGC…VVEVVEETLK (108 aa)). Cys-81, Cys-116, Cys-145, Cys-221, Cys-225, and Cys-228 together coordinate [4Fe-4S] cluster. Positions 207–438 (RKNPLIEIIS…DLFYSYEPYA (232 aa)) constitute a Radical SAM core domain. Positions 438–500 (AQRVGEMYTV…KFSMVGEILD (63 aa)) constitute a TRAM domain. The helical transmembrane segment at 533–553 (VGIALVVGSLAFLLQLLIRFL) threads the bilayer.

Belongs to the methylthiotransferase family. CDKAL1 subfamily. [4Fe-4S] cluster serves as cofactor.

It localises to the membrane. It carries out the reaction N(6)-L-threonylcarbamoyladenosine(37) in tRNA + (sulfur carrier)-SH + AH2 + 2 S-adenosyl-L-methionine = 2-methylsulfanyl-N(6)-L-threonylcarbamoyladenosine(37) in tRNA + (sulfur carrier)-H + 5'-deoxyadenosine + L-methionine + A + S-adenosyl-L-homocysteine + 2 H(+). In terms of biological role, catalyzes the methylthiolation of N6-threonylcarbamoyladenosine (t(6)A), leading to the formation of 2-methylthio-N6-threonylcarbamoyladenosine (ms(2)t(6)A) at position 37 in tRNAs that read codons beginning with adenine. This is Threonylcarbamoyladenosine tRNA methylthiotransferase from Drosophila pseudoobscura pseudoobscura (Fruit fly).